A 660-amino-acid chain; its full sequence is Acyl-coenzyme A oxidase acox-1.3 (660 aa).

FAD contacts are provided by residues 146-149, 154-155, and G188; these read YAQT and GT. Residues 282–285 and R292 contribute to the substrate site; that span reads KIGY. FAD is bound by residues R317 and 337–340; that span reads QQHR. H339, S389, H393, and Q401 together coordinate ATP. 430-431 contacts substrate; that stretch reads YE. E431 (proton acceptor) is an active-site residue. E433 contacts FAD. ATP is bound by residues 524 to 527 and Y572; that span reads RASR. The Microbody targeting signal motif lies at 658 to 660; sequence AKL.

Belongs to the acyl-CoA oxidase family. Forms a heterodimer with acox-1.1; the interaction may be important for the stability of acox-1.3. Requires FAD as cofactor.

The protein resides in the peroxisome. It catalyses the reaction asc-C7-CoA + O2 = asc-DeltaC7-CoA + H2O2. Its pathway is lipid metabolism; peroxisomal fatty acid beta-oxidation. Its activity is regulated as follows. Activated by ATP. ATP binding leads to a conformational change that promotes FAD cofactor binding and enzyme activity. ATP binding likely occurs during acox-1.3 folding and/or dimer formation. Functionally, involved in the first step of peroxisomal beta-oxidation by catalyzing the desaturation of fatty acid-derived side chains of ascaroside pheromones, which regulates development and behavior. Specifically, shortens ascarosides with a 7-carbon side chain (asc-C7). Does not catalyze the desaturation of fatty acids or hydroxylated fatty acids. Involved in the biosynthesis of asc-C6-MK (daumone 2) and asc-delta-C9 (daumone 3) but not asc-C7 (daumone 1); daumones are pheromones produced during unfavourable growth conditions which promote entry into the dauer stage. This is Acyl-coenzyme A oxidase acox-1.3 from Caenorhabditis elegans.